The primary structure comprises 509 residues: Maturase K (509 aa).

The protein belongs to the intron maturase 2 family. MatK subfamily.

Its subcellular location is the plastid. It localises to the chloroplast. Usually encoded in the trnK tRNA gene intron. Probably assists in splicing its own and other chloroplast group II introns. The chain is Maturase K from Hottonia palustris (Water-violet).